The sequence spans 227 residues: ATP-dependent dethiobiotin synthetase BioD (227 aa).

Residue 13–18 (DIGKTY) participates in ATP binding. T17 serves as a coordination point for Mg(2+). K38 is an active-site residue. S42 is a substrate binding site. ATP is bound by residues D55, 116 to 119 (EGSG), and 179 to 180 (NN). The Mg(2+) site is built by D55 and E116.

Belongs to the dethiobiotin synthetase family. As to quaternary structure, homodimer. Requires Mg(2+) as cofactor.

The protein localises to the cytoplasm. It catalyses the reaction (7R,8S)-7,8-diammoniononanoate + CO2 + ATP = (4R,5S)-dethiobiotin + ADP + phosphate + 3 H(+). The protein operates within cofactor biosynthesis; biotin biosynthesis; biotin from 7,8-diaminononanoate: step 1/2. Functionally, catalyzes a mechanistically unusual reaction, the ATP-dependent insertion of CO2 between the N7 and N8 nitrogen atoms of 7,8-diaminopelargonic acid (DAPA, also called 7,8-diammoniononanoate) to form a ureido ring. The protein is ATP-dependent dethiobiotin synthetase BioD of Clostridium botulinum (strain Loch Maree / Type A3).